Reading from the N-terminus, the 117-residue chain is Appetite-regulating hormone (117 aa).

The first 23 residues, 1-23 (MPSPGTVCSLLLLGMLWLDLAMA), serve as a signal peptide directing secretion. S26 carries the O-decanoyl serine; alternate lipid modification. Residue S26 is the site of O-hexanoyl serine; alternate attachment. A lipid anchor (O-octanoyl serine; alternate) is attached at S26. Residues 29–67 (SPEHQRAQQRKESKKPPAKLQPRALGGWLRPEDGDQAEG) form a disordered region. A compositionally biased stretch (basic and acidic residues) spans 31 to 43 (EHQRAQQRKESKK). A propeptide spans 52–75 (ALGGWLRPEDGDQAEGAEDELEIQ) (removed in mature form). At L98 the chain carries Leucine amide. Positions 99-117 (GKFLQDILWEEAKEAPADK) are cleaved as a propeptide — removed in mature form.

The protein belongs to the motilin family. In terms of processing, O-octanoylated by GOAT/MBOAT4. O-octanoylation is essential for ghrelin activity. Amidation of Leu-98 is essential for obestatin activity.

The protein localises to the secreted. Its function is as follows. Ghrelin is the ligand for growth hormone secretagogue receptor type 1 (GHSR). Induces the release of growth hormone from the pituitary. Has an appetite-stimulating effect, induces adiposity and stimulates gastric acid secretion. Involved in growth regulation. In terms of biological role, obestatin may be the ligand for GPR39. May have an appetite-reducing effect resulting in decreased food intake. May reduce gastric emptying activity and jejunal motility. In Papio hamadryas (Hamadryas baboon), this protein is Appetite-regulating hormone (GHRL).